We begin with the raw amino-acid sequence, 468 residues long: Probable soluble pyridine nucleotide transhydrogenase (468 aa).

33–42 (ERGRMLGGVC) is an FAD binding site.

This sequence belongs to the class-I pyridine nucleotide-disulfide oxidoreductase family. It depends on FAD as a cofactor.

It is found in the cytoplasm. The catalysed reaction is NAD(+) + NADPH = NADH + NADP(+). Functionally, conversion of NADPH, generated by peripheral catabolic pathways, to NADH, which can enter the respiratory chain for energy generation. The polypeptide is Probable soluble pyridine nucleotide transhydrogenase (sthA) (Mycobacterium bovis (strain ATCC BAA-935 / AF2122/97)).